The chain runs to 86 residues: MNSKIFAVLFLLAFLSCVLSDQYCPKSSITACKKMNIRNDCCKDDDCTGGSWCCATPCGNFCKYPTDRPGGKRAAGGKSCKTGYVY.

The N-terminal stretch at 1-20 is a signal peptide; it reads MNSKIFAVLFLLAFLSCVLS. The WAP domain maps to 21-66; sequence DQYCPKSSITACKKMNIRNDCCKDDDCTGGSWCCATPCGNFCKYPT. Cystine bridges form between C24-C54, C32-C58, C41-C53, C42-C80, and C47-C62.

Belongs to the venom protein 11 family. 01 (wap-1) subfamily. Contains 5 disulfide bonds. As to expression, expressed by the venom gland.

The protein resides in the secreted. In terms of biological role, has antibacterial activity. This chain is U15-lycotoxin-Ls1d, found in Lycosa singoriensis (Wolf spider).